Consider the following 221-residue polypeptide: Histidine biosynthesis bifunctional protein HisIE (221 aa).

Positions 1–121 (MNITKIDWQK…KKQQFANWAW (121 aa)) are phosphoribosyl-AMP cyclohydrolase. The tract at residues 122 to 221 (FIKLEQHLKE…IGLHPEGGNK (100 aa)) is phosphoribosyl-ATP pyrophosphohydrolase.

This sequence in the N-terminal section; belongs to the PRA-CH family. It in the C-terminal section; belongs to the PRA-PH family.

It is found in the cytoplasm. It carries out the reaction 1-(5-phospho-beta-D-ribosyl)-ATP + H2O = 1-(5-phospho-beta-D-ribosyl)-5'-AMP + diphosphate + H(+). The catalysed reaction is 1-(5-phospho-beta-D-ribosyl)-5'-AMP + H2O = 1-(5-phospho-beta-D-ribosyl)-5-[(5-phospho-beta-D-ribosylamino)methylideneamino]imidazole-4-carboxamide. Its pathway is amino-acid biosynthesis; L-histidine biosynthesis; L-histidine from 5-phospho-alpha-D-ribose 1-diphosphate: step 2/9. It functions in the pathway amino-acid biosynthesis; L-histidine biosynthesis; L-histidine from 5-phospho-alpha-D-ribose 1-diphosphate: step 3/9. The polypeptide is Histidine biosynthesis bifunctional protein HisIE (hisI) (Haemophilus influenzae (strain ATCC 51907 / DSM 11121 / KW20 / Rd)).